An 86-amino-acid polypeptide reads, in one-letter code: Evasin-3 (86 aa).

The first 20 residues, 1–20 (MRALLARLLLCVLVVSDSKG), serve as a signal peptide directing secretion. Disulfide bonds link Cys42/Cys57, Cys46/Cys59, and Cys53/Cys70. The N-linked (GlcNAc...) asparagine glycan is linked to Asn45. Asn76 carries N-linked (GlcNAc...) asparagine glycosylation.

In terms of assembly, monomer.

The protein localises to the secreted. Salivary chemokine-binding protein which shows chemokine neutralizing activity and binds to host chemokines CXCL1, CXCL2, CXCL3, CXCL5, CXCL6 and CXCL8. Binds to CXCL8 with 1:1 stoichiometry. Disrupts CXCL8 homodimer formation, disrupts the glycosaminoglycan-binding site of CXCL8 and inhibits the interaction of CXCL8 with CXCR2. The sequence is that of Evasin-3 from Rhipicephalus sanguineus (Brown dog tick).